Consider the following 741-residue polypeptide: uncharacterized protein (741 aa).

A compositionally biased stretch (polar residues) spans 1 to 17 (MDSNTNENNSHASSNER). The segment at 1–50 (MDSNTNENNSHASSNERQSSEGHDDYLNRNPNSEATEGEEGTHPTTGTQP) is disordered. Residues 18–27 (QSSEGHDDYL) show a composition bias toward basic and acidic residues. The RING-type 1; degenerate zinc finger occupies 107-150 (CPICYDDMNENDEKQATKMPCGHIFGKNCLQKWLENHCTCPLCR). 3 stretches are compositionally biased toward polar residues: residues 177–193 (GNQG…SNGV), 252–263 (PDSNTSTPTTRS), and 277–302 (NASS…NAFF). Disordered stretches follow at residues 177–214 (GNQG…RTGV), 238–387 (SATN…NTNR), 500–543 (QPAV…PGIT), 561–619 (ENRM…TPTH), 638–688 (STPS…PQCQ), and 713–741 (RCQQ…EEHK). Residues 316–332 (TSNLTSNSGSMTNSTST) are compositionally biased toward low complexity. Polar residues-rich tracts occupy residues 333 to 344 (DLPTSNLPSQNA) and 357 to 386 (PPNL…ANTN). Composition is skewed to polar residues over residues 563–586 (RMNQ…SINV), 604–619 (ENSS…TPTH), and 652–661 (SKVSSGTSTP). The RING-type 2; degenerate zinc finger occupies 687–736 (CQLEDQGICDPNDRFVHFECGHSVHERCQQSTSNSENQMDEEIGECPKCR). Residues 731–741 (ECPKCRNEEHK) show a composition bias toward basic and acidic residues.

It localises to the nucleus. This is an uncharacterized protein from Schizosaccharomyces pombe (strain 972 / ATCC 24843) (Fission yeast).